The primary structure comprises 513 residues: GMP synthase [glutamine-hydrolyzing] (513 aa).

The region spanning 8–198 (MILVLDFGSQ…VFGVCDCEGK (191 aa)) is the Glutamine amidotransferase type-1 domain. Cys85 acts as the Nucleophile in catalysis. Active-site residues include His172 and Glu174. The GMPS ATP-PPase domain maps to 199-388 (WSMENFIEIE…LGLPDDIVWR (190 aa)). 226–232 (SGGVDSS) lines the ATP pocket.

Homodimer.

It carries out the reaction XMP + L-glutamine + ATP + H2O = GMP + L-glutamate + AMP + diphosphate + 2 H(+). It participates in purine metabolism; GMP biosynthesis; GMP from XMP (L-Gln route): step 1/1. Catalyzes the synthesis of GMP from XMP. The sequence is that of GMP synthase [glutamine-hydrolyzing] from Bacillus velezensis (strain DSM 23117 / BGSC 10A6 / LMG 26770 / FZB42) (Bacillus amyloliquefaciens subsp. plantarum).